A 117-amino-acid polypeptide reads, in one-letter code: Ig heavy chain V region 1-62-3 (117 aa).

The first 19 residues, 1-19, serve as a signal peptide directing secretion; that stretch reads MGWSCIMLFLAATATGVHF. The segment at 20 to 49 is framework-1; the sequence is QVQLQQPGAELVKPGASVKLSSKASGYTFT. A complementarity-determining-1 region spans residues 50-54; that stretch reads SYWMH. The tract at residues 55–68 is framework-2; it reads WVKQRPGRGLEWIG. The interval 69-85 is complementarity-determining-2; that stretch reads RIDPNSGGTKYNEKFKS. Residues 86 to 117 form a framework-3 region; the sequence is KATLTVDKPSSTAYMQLSSLTSEDSAVYYCAR.

In Mus musculus (Mouse), this protein is Ig heavy chain V region 1-62-3 (Ighv1-62-3).